A 488-amino-acid chain; its full sequence is MIMSNLWILTLISTILAVFAAVLIIFRRRISASTTEWPVGPKTLPIIGNLHILGGTALHVVLHKLAEVYGSVMTIWIGSWKPVIIVSDFDRAWEVLVNKSSDYSAREMPEITKIGTANWRTISSSDSGPFWATLRKGLQSVALSPQHLASQTAHQERDIIKLIKNLKDEAALNSGMVKPLDHLKKATVRLISRLIYGQDFDDDKYVEDMHDVIEFLIRISGYAQLAEVFYYAKYLPSHKRAVTGAEEAKRRVIALVRPFLQSNPATNTYLHFLKSQLYPEEVIIFAIFEAYLLGVDSTSSTTAWALAFLIREPSVQEKLYQELKNFTANNNRTMLKVEDVNKLPYLQAVVKETMRMKPIAPLAIPHKACKDTSLMGKKVDKGTKVMVNIHALHHTEKVWKEPYKFMPERFLQKHDKAMEQSLLPFSAGMRICAGMELGKLQFSFSLANLVNAFKWSCVSDGVLPDMSDLLGFVLFMKTPLEARIVPRL.

A helical membrane pass occupies residues 6–26 (LWILTLISTILAVFAAVLIIF). Cysteine 432 is a heme binding site.

Belongs to the cytochrome P450 family. It depends on heme as a cofactor.

The protein localises to the membrane. It carries out the reaction (S)-tetrahydrocolumbamine + reduced [NADPH--hemoprotein reductase] + O2 = (S)-canadine + oxidized [NADPH--hemoprotein reductase] + 2 H2O + H(+). The protein operates within alkaloid biosynthesis. Its function is as follows. Cytochrome P450 involved in the biosynthesis of the benzylisoquinoline alkaloid noscapine. Converts (S)-tetrahydrocolumbamine to (S)-canadine. The protein is (S)-canadine synthase CYP719A21 of Papaver somniferum (Opium poppy).